The chain runs to 447 residues: MANVVVVGAQWGDEGKGKITDLLSKSADVVVRYQGGVNAGHTIVVKDQTLKLHLIPSGILYPDTQCIIGAGTVVDPKVLLEELEQLEQLGVSTENLLIAETAHVTMPYHRQLDIAAEERRGSRRIGTTGRGIGPTYADKSERTGIRMLDLLDRDQLAAKLEWAIAQKNLILEKLYGLAPLEPQPIIEEYSAYGERLRSHIVDGSLVLDDAIRRRRNILFEGAQGTLLDLDHGTYPYVTSSNPVAGGACVGAGIGPTMIDRVIGVAKAYTTRVGEGPFPTELLDEVGELLGDRGAEFGTTTGRRRRCGWFDAVIGRYAVRINGLDCLAITKLDVLDELPEIKVCVAYDIDGERCEHFPSNALKFARCRPIYETLPGWQQSTRHCRSLDDLPKAALNYLKFLAEIMSVPIAIVSLGAERSQTIIVEDPIHGPKRALLKDDGTQVHPILS.

GTP is bound by residues 12-18 and 40-42; these read GDEGKGK and GHT. D13 acts as the Proton acceptor in catalysis. Mg(2+) contacts are provided by D13 and G40. IMP is bound by residues 13–16, 38–41, T128, R142, Q223, T238, and R302; these read DEGK and NAGH. H41 functions as the Proton donor in the catalytic mechanism. Substrate is bound at residue 298-304; it reads TTTGRRR. GTP-binding positions include R304, 330 to 332, and 412 to 414; these read KLD and SLG.

This sequence belongs to the adenylosuccinate synthetase family. As to quaternary structure, homodimer. Requires Mg(2+) as cofactor.

The protein resides in the cytoplasm. The enzyme catalyses IMP + L-aspartate + GTP = N(6)-(1,2-dicarboxyethyl)-AMP + GDP + phosphate + 2 H(+). It functions in the pathway purine metabolism; AMP biosynthesis via de novo pathway; AMP from IMP: step 1/2. Its function is as follows. Plays an important role in the de novo pathway of purine nucleotide biosynthesis. Catalyzes the first committed step in the biosynthesis of AMP from IMP. This chain is Adenylosuccinate synthetase, found in Thermosynechococcus vestitus (strain NIES-2133 / IAM M-273 / BP-1).